Consider the following 255-residue polypeptide: Thiazole synthase (255 aa).

The active-site Schiff-base intermediate with DXP is K96. Residues G157, 183–184, and 205–206 contribute to the 1-deoxy-D-xylulose 5-phosphate site; these read AG and NT.

The protein belongs to the ThiG family. Homotetramer. Forms heterodimers with either ThiH or ThiS.

It is found in the cytoplasm. The enzyme catalyses [ThiS sulfur-carrier protein]-C-terminal-Gly-aminoethanethioate + 2-iminoacetate + 1-deoxy-D-xylulose 5-phosphate = [ThiS sulfur-carrier protein]-C-terminal Gly-Gly + 2-[(2R,5Z)-2-carboxy-4-methylthiazol-5(2H)-ylidene]ethyl phosphate + 2 H2O + H(+). Its pathway is cofactor biosynthesis; thiamine diphosphate biosynthesis. Functionally, catalyzes the rearrangement of 1-deoxy-D-xylulose 5-phosphate (DXP) to produce the thiazole phosphate moiety of thiamine. Sulfur is provided by the thiocarboxylate moiety of the carrier protein ThiS. In vitro, sulfur can be provided by H(2)S. The chain is Thiazole synthase from Staphylococcus haemolyticus (strain JCSC1435).